Reading from the N-terminus, the 389-residue chain is Ribonucleoside-diphosphate reductase subunit M2 (389 aa).

Ser20 bears the Phosphoserine mark. Position 33 is a phosphothreonine (Thr33). The Cy motif lies at 49-51; sequence RRI. Fe cation is bound by residues Asp138, Glu169, and His172. The active site involves Tyr176. The Fe cation site is built by Glu232, Glu266, and His269.

The protein belongs to the ribonucleoside diphosphate reductase small chain family. As to quaternary structure, heterodimer of a large and a small subunit. Interacts (via Cy motif and when phosphorylated at Thr-33) with CCNF; the interaction occurs exclusively in G2 and early M. The cofactor is Fe cation. Post-translationally, phosphorylation on Ser-20 relieves the inhibitory effect on Wnt signaling. Phosphorylated on Thr-33 by CDK1 and CDK2; predominantly in G2 and M phase. Ubiquitinated by the SCF(CCNF) E3 ubiquitin-protein ligase complex; leading to its degradation by the proteasome.

It is found in the cytoplasm. It localises to the nucleus. The catalysed reaction is a 2'-deoxyribonucleoside 5'-diphosphate + [thioredoxin]-disulfide + H2O = a ribonucleoside 5'-diphosphate + [thioredoxin]-dithiol. Its function is as follows. Provides the precursors necessary for DNA synthesis. Catalyzes the biosynthesis of deoxyribonucleotides from the corresponding ribonucleotides. Inhibits Wnt signaling. This chain is Ribonucleoside-diphosphate reductase subunit M2 (RRM2), found in Homo sapiens (Human).